Consider the following 40-residue polypeptide: Large ribosomal subunit protein bL36 (40 aa).

It belongs to the bacterial ribosomal protein bL36 family.

The polypeptide is Large ribosomal subunit protein bL36 (Corynebacterium jeikeium (strain K411)).